The sequence spans 233 residues: Large ribosomal subunit protein uL1 (233 aa).

Belongs to the universal ribosomal protein uL1 family. In terms of assembly, part of the 50S ribosomal subunit.

Its function is as follows. Binds directly to 23S rRNA. The L1 stalk is quite mobile in the ribosome, and is involved in E site tRNA release. Functionally, protein L1 is also a translational repressor protein, it controls the translation of the L11 operon by binding to its mRNA. This chain is Large ribosomal subunit protein uL1, found in Pseudoalteromonas atlantica (strain T6c / ATCC BAA-1087).